The chain runs to 692 residues: Putative ESX-1 scaffolding and assembly protein SaeA (692 aa).

Residues 1-21 (MGERGELVSDLHPSDDHDADP) are compositionally biased toward basic and acidic residues. Disordered regions lie at residues 1-23 (MGERGELVSDLHPSDDHDADPRL) and 87-134 (PAAP…TTGF). Over residues 89-107 (APEPDPPPVPEPQPEPEPG) the composition is skewed to pro residues.

Functionally, may be involved in assembly of the ESX-1 / type VII specialized secretion system (T7SS), which exports several proteins including EsxA and EsxB. Involved in DNA conjugation in recipient (MKD8) but not donor (mc(2)155) strain. The polypeptide is Putative ESX-1 scaffolding and assembly protein SaeA (saeA) (Mycolicibacterium smegmatis (strain MKD8) (Mycobacterium smegmatis)).